A 794-amino-acid polypeptide reads, in one-letter code: Putative neurotrophin receptor LTRK 1 (794 aa).

The N-terminal stretch at 1 to 33 is a signal peptide; that stretch reads MRGPRRFRLWTRANVLTVISILTSILSGAGCSP. The Extracellular portion of the chain corresponds to 34–419; the sequence is LSQLPSDNPA…PTEDFGPQTQ (386 aa). The tract at residues 36-102 is disordered; sequence QLPSDNPAHV…DQVPGDASRN (67 aa). Residues N64, N102, and N128 are each glycosylated (N-linked (GlcNAc...) asparagine). 2 LRR repeats span residues 181 to 202 and 205 to 226; these read CLKHLTIENCGLNNIQGIAFKT and SLETINLRHNHLTEFPQELLRT. The LRRCT domain occupies 237–280; that stretch reads NALTCSCTNLWLRSVDVAADRSEMTCSTRDGVSKMKMTQFKCEP. N288 and N374 each carry an N-linked (GlcNAc...) asparagine glycan. A helical membrane pass occupies residues 420–440; it reads VILPVVGVVILLISAVFIIYL. At 441–794 the chain is on the cytoplasmic side; the sequence is CQRAKHRSHA…GDPVYIDIIA (354 aa). The region spanning 504 to 775 is the Protein kinase domain; it reads ILLMRVIGEG…PQDRLTMKDI (272 aa). ATP is bound by residues 510–518 and K538; that span reads IGEGAFGRV. Catalysis depends on D647, which acts as the Proton acceptor. Phosphotyrosine; by autocatalysis is present on residues Y673, Y677, Y678, and Y789.

This sequence belongs to the protein kinase superfamily. Tyr protein kinase family. Insulin receptor subfamily. In terms of tissue distribution, expression is confined to the central nervous system and its associated endocrine tissues.

The protein resides in the membrane. The enzyme catalyses L-tyrosyl-[protein] + ATP = O-phospho-L-tyrosyl-[protein] + ADP + H(+). In terms of biological role, may bind an endogenous invertebrate neurotrophin. Binds human NT-3, but not NGF or BDNF. This Lymnaea stagnalis (Great pond snail) protein is Putative neurotrophin receptor LTRK 1.